The primary structure comprises 56 residues: Per os infectivity factor AC110 (56 aa).

In terms of biological role, plays an essential role in the process of oral infection. May participate in the crossing of occlusion-derived virions through the host peritrophic membrane during oral infection. In Autographa californica nuclear polyhedrosis virus (AcMNPV), this protein is Per os infectivity factor AC110.